Reading from the N-terminus, the 140-residue chain is Large ribosomal subunit protein uL24 (140 aa).

This sequence belongs to the universal ribosomal protein uL24 family. As to quaternary structure, part of the 50S ribosomal subunit.

In terms of biological role, one of two assembly initiator proteins, it binds directly to the 5'-end of the 23S rRNA, where it nucleates assembly of the 50S subunit. Its function is as follows. Located at the polypeptide exit tunnel on the outside of the subunit. The chain is Large ribosomal subunit protein uL24 from Nanoarchaeum equitans (strain Kin4-M).